Here is a 406-residue protein sequence, read N- to C-terminus: Acetate kinase (406 aa).

Asparagine 7 provides a ligand contact to Mg(2+). Lysine 14 contacts ATP. Arginine 90 is a binding site for substrate. Aspartate 147 acts as the Proton donor/acceptor in catalysis. ATP is bound by residues 207–211 (HLGNG), 283–285 (DMR), and 331–335 (GVGEN). A Mg(2+)-binding site is contributed by glutamate 385.

The protein belongs to the acetokinase family. Homodimer. Requires Mg(2+) as cofactor. The cofactor is Mn(2+).

The protein localises to the cytoplasm. The catalysed reaction is acetate + ATP = acetyl phosphate + ADP. Its pathway is metabolic intermediate biosynthesis; acetyl-CoA biosynthesis; acetyl-CoA from acetate: step 1/2. Functionally, catalyzes the formation of acetyl phosphate from acetate and ATP. Can also catalyze the reverse reaction. The sequence is that of Acetate kinase from Thermosipho melanesiensis (strain DSM 12029 / CIP 104789 / BI429).